Here is a 159-residue protein sequence, read N- to C-terminus: Heat shock protein beta-9 (159 aa).

The 112-residue stretch at 36 to 147 (LLRDSPAAQE…EAQTGPSPRL (112 aa)) folds into the sHSP domain.

Belongs to the small heat shock protein (HSP20) family. In terms of tissue distribution, testis specific.

Its subcellular location is the cytoplasm. The protein resides in the nucleus. The sequence is that of Heat shock protein beta-9 (HSPB9) from Homo sapiens (Human).